The following is a 93-amino-acid chain: MALMVLMALVGCSTPPPVQKAQRVKVDPLRSLNMEALCKDQAAKRYNTGEQKIDVTAFEQFQGSYEMRGYTFRKEQFVCSFDADGHFLHLSMR.

The first 11 residues, 1–11 (MALMVLMALVG), serve as a signal peptide directing secretion. Cys-12 carries N-palmitoyl cysteine lipidation. Residue Cys-12 is the site of S-diacylglycerol cysteine attachment.

It is found in the cell membrane. This is an uncharacterized protein from Escherichia coli O6:K15:H31 (strain 536 / UPEC).